Consider the following 308-residue polypeptide: Sulfate adenylyltransferase subunit 2 (308 aa).

The interval 286–308 (RQGRIIDHDGSASMEKKKQEGYF) is disordered.

This sequence belongs to the PAPS reductase family. CysD subfamily. In terms of assembly, heterodimer composed of CysD, the smaller subunit, and CysN.

It carries out the reaction sulfate + ATP + H(+) = adenosine 5'-phosphosulfate + diphosphate. The protein operates within sulfur metabolism; hydrogen sulfide biosynthesis; sulfite from sulfate: step 1/3. Its function is as follows. With CysN forms the ATP sulfurylase (ATPS) that catalyzes the adenylation of sulfate producing adenosine 5'-phosphosulfate (APS) and diphosphate, the first enzymatic step in sulfur assimilation pathway. APS synthesis involves the formation of a high-energy phosphoric-sulfuric acid anhydride bond driven by GTP hydrolysis by CysN coupled to ATP hydrolysis by CysD. This is Sulfate adenylyltransferase subunit 2 from Nocardia farcinica (strain IFM 10152).